The primary structure comprises 136 residues: Snaclec rhodocytin subunit alpha (136 aa).

3 cysteine pairs are disulfide-bonded: cysteine 5/cysteine 16, cysteine 33/cysteine 131, and cysteine 106/cysteine 123. Positions tyrosine 12–lysine 132 constitute a C-type lectin domain.

The protein belongs to the snaclec family. In terms of assembly, dimer (non-covalently linked) of heterodimers of subunits alpha and beta (disulfide-linked). In terms of tissue distribution, expressed by the venom gland.

Its subcellular location is the secreted. Elicits platelet aggregation by the binding to the C-type lectin domain family 1 member B (CLEC1B/CLEC2). Binding leads to tyrosine phosphorylation in the cytoplasmic tail of CLEC1B, which promotes the binding of spleen tyrosine kinase (Syk), subsequent activation of PLC-gamma-2, and platelet activation and aggregation. Binding to GPIbalpha (GP1BA) and alpha-2/beta-1 (ITGA2/ITGB1) may also induce aggregation, but this is controversial. This chain is Snaclec rhodocytin subunit alpha, found in Calloselasma rhodostoma (Malayan pit viper).